We begin with the raw amino-acid sequence, 104 residues long: Gastrin (104 aa).

A signal peptide spans 1-21 (MQRLCVCVLILALALTAFSEA). The disordered stretch occupies residues 22–49 (SWKPRSQLQDAPSGPGANGGLEPHWLNR). Residues 22 to 58 (SWKPRSQLQDAPSGPGANGGLEPHWLNRLGPASHHRW) constitute a propeptide that is removed on maturation. Residues Gln-59 and Gln-76 each carry the pyrrolidone carboxylic acid modification. Residue Tyr-87 is modified to Sulfotyrosine. Phe-92 carries the post-translational modification Phenylalanine amide. Ser-96 bears the Phosphoserine mark. Residues 96–104 (SAEDGDQHP) constitute a propeptide that is removed on maturation.

The protein belongs to the gastrin/cholecystokinin family.

The protein localises to the secreted. Functionally, gastrin stimulates the stomach mucosa to produce and secrete hydrochloric acid and the pancreas to secrete its digestive enzymes. It also stimulates smooth muscle contraction and increases blood circulation and water secretion in the stomach and intestine. This is Gastrin (GAST) from Felis catus (Cat).